Reading from the N-terminus, the 672-residue chain is uncharacterized protein (672 aa).

It belongs to the MG032/MG096/MG288 family.

This is an uncharacterized protein from Mycoplasma pneumoniae (strain ATCC 29342 / M129 / Subtype 1) (Mycoplasmoides pneumoniae).